The sequence spans 160 residues: Tic20 family protein (160 aa).

4 helical membrane-spanning segments follow: residues 13 to 33 (FFSA…GGFL), 53 to 73 (FYYQ…MAVV), 87 to 107 (MQAI…AYVI), and 122 to 142 (NFAF…SVLG).

It belongs to the Tic20 family.

The protein resides in the cell membrane. The protein is Tic20 family protein of Synechocystis sp. (strain ATCC 27184 / PCC 6803 / Kazusa).